A 327-amino-acid polypeptide reads, in one-letter code: Acetyl-coenzyme A carboxylase carboxyl transferase subunit beta (327 aa).

Residues 24-293 (LWIKCPDTGQ…LTVTTAVEAP (270 aa)) form the CoA carboxyltransferase N-terminal domain. The segment covering 293–311 (PAEAAAKAEPEATTTEQPV) has biased composition (low complexity). The interval 293–327 (PAEAAAKAEPEATTTEQPVAPAPTEPPAQPAAPQA) is disordered. Residues 312 to 327 (APAPTEPPAQPAAPQA) show a composition bias toward pro residues.

Belongs to the AccD/PCCB family. As to quaternary structure, acetyl-CoA carboxylase is a heterohexamer composed of biotin carboxyl carrier protein (AccB), biotin carboxylase (AccC) and two subunits each of ACCase subunit alpha (AccA) and ACCase subunit beta (AccD).

The protein localises to the cytoplasm. It catalyses the reaction N(6)-carboxybiotinyl-L-lysyl-[protein] + acetyl-CoA = N(6)-biotinyl-L-lysyl-[protein] + malonyl-CoA. Its pathway is lipid metabolism; malonyl-CoA biosynthesis; malonyl-CoA from acetyl-CoA: step 1/1. Its function is as follows. Component of the acetyl coenzyme A carboxylase (ACC) complex. Biotin carboxylase (BC) catalyzes the carboxylation of biotin on its carrier protein (BCCP) and then the CO(2) group is transferred by the transcarboxylase to acetyl-CoA to form malonyl-CoA. This is Acetyl-coenzyme A carboxylase carboxyl transferase subunit beta from Rhodopseudomonas palustris (strain TIE-1).